Consider the following 190-residue polypeptide: Adenine phosphoribosyltransferase (190 aa).

The protein belongs to the purine/pyrimidine phosphoribosyltransferase family. As to quaternary structure, homodimer.

The protein resides in the cytoplasm. The enzyme catalyses AMP + diphosphate = 5-phospho-alpha-D-ribose 1-diphosphate + adenine. It functions in the pathway purine metabolism; AMP biosynthesis via salvage pathway; AMP from adenine: step 1/1. Its function is as follows. Catalyzes a salvage reaction resulting in the formation of AMP, that is energically less costly than de novo synthesis. This is Adenine phosphoribosyltransferase from Treponema pallidum (strain Nichols).